Reading from the N-terminus, the 202-residue chain is GTP cyclohydrolase-2 (202 aa).

Position 49-53 (49-53) interacts with GTP; that stretch reads RIHSE. Positions 54, 65, and 67 each coordinate Zn(2+). GTP-binding positions include glutamine 70, 92–94, and threonine 114; that span reads EGR. Aspartate 126 acts as the Proton acceptor in catalysis. Residue arginine 128 is the Nucleophile of the active site. GTP is bound by residues threonine 149 and lysine 154.

The protein belongs to the GTP cyclohydrolase II family. Requires Zn(2+) as cofactor.

The enzyme catalyses GTP + 4 H2O = 2,5-diamino-6-hydroxy-4-(5-phosphoribosylamino)-pyrimidine + formate + 2 phosphate + 3 H(+). It functions in the pathway cofactor biosynthesis; riboflavin biosynthesis; 5-amino-6-(D-ribitylamino)uracil from GTP: step 1/4. Catalyzes the conversion of GTP to 2,5-diamino-6-ribosylamino-4(3H)-pyrimidinone 5'-phosphate (DARP), formate and pyrophosphate. This Shewanella frigidimarina (strain NCIMB 400) protein is GTP cyclohydrolase-2.